A 337-amino-acid polypeptide reads, in one-letter code: Anthranilate phosphoribosyltransferase (337 aa).

5-phospho-alpha-D-ribose 1-diphosphate contacts are provided by residues G81, 84–85, S89, 91–94, 109–117, and A121; these read GD, NVST, and KHGNRALSS. Residue G81 coordinates anthranilate. Residue S93 participates in Mg(2+) binding. Anthranilate is bound at residue N112. R167 is a binding site for anthranilate. Mg(2+) is bound by residues D226 and E227.

Belongs to the anthranilate phosphoribosyltransferase family. In terms of assembly, homodimer. Mg(2+) is required as a cofactor.

The catalysed reaction is N-(5-phospho-beta-D-ribosyl)anthranilate + diphosphate = 5-phospho-alpha-D-ribose 1-diphosphate + anthranilate. The protein operates within amino-acid biosynthesis; L-tryptophan biosynthesis; L-tryptophan from chorismate: step 2/5. Its function is as follows. Catalyzes the transfer of the phosphoribosyl group of 5-phosphorylribose-1-pyrophosphate (PRPP) to anthranilate to yield N-(5'-phosphoribosyl)-anthranilate (PRA). The sequence is that of Anthranilate phosphoribosyltransferase from Bradyrhizobium sp. (strain ORS 278).